The following is a 104-amino-acid chain: L-rhamnose mutarotase (104 aa).

Tyr-18 contacts substrate. His-22 (proton donor) is an active-site residue. Substrate contacts are provided by residues Tyr-41 and 76–77 (WW).

The protein belongs to the rhamnose mutarotase family. As to quaternary structure, homodimer.

Its subcellular location is the cytoplasm. It catalyses the reaction alpha-L-rhamnose = beta-L-rhamnose. It functions in the pathway carbohydrate metabolism; L-rhamnose metabolism. In terms of biological role, involved in the anomeric conversion of L-rhamnose. In Listeria monocytogenes serovar 1/2a (strain ATCC BAA-679 / EGD-e), this protein is L-rhamnose mutarotase.